The primary structure comprises 309 residues: Serine/threonine-protein phosphatase 2A catalytic subunit alpha isoform (309 aa).

Mn(2+) contacts are provided by D57, H59, D85, and N117. Zn(2+)-binding residues include D57, H59, and D85. Fe(3+) contacts are provided by D85 and N117. The active-site Proton donor is H118. Residues H167 and H241 each contribute to the Mn(2+) site. Positions 167 and 241 each coordinate Fe(3+). At Y307 the chain carries Phosphotyrosine. L309 bears the Leucine methyl ester mark.

Belongs to the PPP phosphatase family. PP-1 subfamily. PP2A consists of a common heterodimeric core enzyme composed of PPP2CA, a 36 kDa catalytic subunit (subunit C), and PPP2R1A, a 65 kDa constant regulatory subunit (PR65 or subunit A), that associates with a variety of regulatory subunits. Proteins that associate with the core dimer include three families of regulatory subunits B (the R2/B/PR55/B55, R3/B''/PR72/PR130/PR59 and R5/B'/B56 families), the 48 kDa variable regulatory subunit, viral proteins, and cell signaling molecules. Interacts with the PP2A A subunit PPP2R1A. Interacts with the regulatory subunit PPP2R2A. Interacts (via C-terminus) with PTPA. Interacts with NXN; the interaction is direct. Interacts with KCTD20. Interacts with BTBD10. Interacts with SGO1 and SGO2. Interacts with RAF1. Interaction with IGBP1 protects unassembled PPP2CA from degradative ubiquitination. Interacts with GSK3B (via C2 domain). Interacts with MFHAS1; retains PPP2CA into the cytoplasm and excludes it from the nucleus. Interacts with PABIR1/FAM122A. Interacts with ADCY8; interaction is phosphatase activity-dependent; antagonizes interaction between ADCY8 and calmodulin. Interacts with CRTC3 (when phosphorylated at 'Ser-391'). Interacts with SPRY2; the interaction is inhibited by TESK1 interaction with SPRY2, possibly by vesicular sequestration of SPRY2. Interacts with TRAF3IP3. Interacts with AMBRA1 (via PxP motifs); enhancing interaction between PPP2CA and MYC or FOXO3. Forms a complex with AMBRA1 and BECN1; AMBRA1 and BECN1 components of the complex regulate MYC stability via different pathways. Part of the core of STRIPAK complexes composed of PP2A catalytic and scaffolding subunits, the striatins (PP2A regulatory subunits), the striatin-associated proteins MOB4, STRIP1 and STRIP2, PDCD10 and members of the STE20 kinases, such as STK24 and STK26. Phosphatase component of the Integrator-PP2A (INTAC) complex, composed of the Integrator core complex and protein phosphatase 2A subunits PPP2CA and PPP2R1A. Mn(2+) serves as cofactor. The cofactor is Fe(3+). It depends on Zn(2+) as a cofactor. In terms of processing, reversibly methyl esterified on Leu-309 by leucine carboxyl methyltransferase 1 (LCMT1) and protein phosphatase methylesterase 1 (PPME1). Carboxyl methylation influences the affinity of the catalytic subunit for the different regulatory subunits, thereby modulating the PP2A holoenzyme's substrate specificity, enzyme activity and cellular localization. Post-translationally, phosphorylation of either threonine (by autophosphorylation-activated protein kinase) or tyrosine results in inactivation of the phosphatase. Auto-dephosphorylation has been suggested as a mechanism for reactivation. Polyubiquitinated, leading to its degradation by the proteasome.

It is found in the cytoplasm. Its subcellular location is the nucleus. The protein localises to the chromosome. It localises to the centromere. The protein resides in the cytoskeleton. It is found in the spindle pole. It catalyses the reaction O-phospho-L-seryl-[protein] + H2O = L-seryl-[protein] + phosphate. The catalysed reaction is O-phospho-L-threonyl-[protein] + H2O = L-threonyl-[protein] + phosphate. Its activity is regulated as follows. Inhibited by the interaction between PPP2R2A and ARPP19; this inhibition is enhanced when ARPP19 is phosphorylated. Inhibited by the interaction between PPP2R2A and PABIR1/FAM122A. In terms of biological role, catalytic subunit of protein phosphatase 2A (PP2A), a serine/threonine phosphatase involved in the regulation of a wide variety of enzymes, signal transduction pathways, and cellular events. PP2A is the major phosphatase for microtubule-associated proteins (MAPs). PP2A can modulate the activity of phosphorylase B kinase casein kinase 2, mitogen-stimulated S6 kinase, and MAP-2 kinase. Cooperates with SGO2 to protect centromeric cohesin from separase-mediated cleavage in oocytes specifically during meiosis I. Can dephosphorylate various proteins, such as SV40 large T antigen, AXIN1, p53/TP53, PIM3, WEE1. Activates RAF1 by dephosphorylating it at 'Ser-259'. Mediates dephosphorylation of WEE1, preventing its ubiquitin-mediated proteolysis, increasing WEE1 protein levels, and promoting the G2/M checkpoint. Mediates dephosphorylation of MYC; promoting its ubiquitin-mediated proteolysis: interaction with AMBRA1 enhances interaction between PPP2CA and MYC. Mediates dephosphorylation of FOXO3; promoting its stabilization: interaction with AMBRA1 enhances interaction between PPP2CA and FOXO3. Catalyzes dephosphorylation of the pyrin domain of NLRP3, promoting assembly of the NLRP3 inflammasome. Together with RACK1 adapter, mediates dephosphorylation of AKT1 at 'Ser-473', preventing AKT1 activation and AKT-mTOR signaling pathway. Dephosphorylation of AKT1 is essential for regulatory T-cells (Treg) homeostasis and stability. Catalyzes dephosphorylation of PIM3, promotinh PIM3 ubiquitination and proteasomal degradation. Part of the striatin-interacting phosphatase and kinase (STRIPAK) complexes. STRIPAK complexes have critical roles in protein (de)phosphorylation and are regulators of multiple signaling pathways including Hippo, MAPK, nuclear receptor and cytoskeleton remodeling. Different types of STRIPAK complexes are involved in a variety of biological processes such as cell growth, differentiation, apoptosis, metabolism and immune regulation. Key mediator of a quality checkpoint during transcription elongation as part of the Integrator-PP2A (INTAC) complex. The INTAC complex drives premature transcription termination of transcripts that are unfavorably configured for transcriptional elongation: within the INTAC complex, PPP2CA catalyzes dephosphorylation of the C-terminal domain (CTD) of Pol II subunit POLR2A/RPB1 and SUPT5H/SPT5, thereby preventing transcriptional elongation. The chain is Serine/threonine-protein phosphatase 2A catalytic subunit alpha isoform (PPP2CA) from Homo sapiens (Human).